Reading from the N-terminus, the 459-residue chain is Inositol-trisphosphate 3-kinase A (459 aa).

The segment at Met1–Arg29 is disordered. Omega-N-methylarginine is present on residues Arg35, Arg55, and Arg62. The tract at residues Ala49–His164 is disordered. The segment covering Arg116–Leu132 has biased composition (low complexity). Residues Ser135 and Ser195 each carry the phosphoserine modification. Residues Ser195, Lys207, Gln247 to Leu249, and Asp260 each bind ATP. Lys262 and Arg283 together coordinate substrate. The calmodulin-binding stretch occupies residues Asp285–Val293. Lys310–Arg317 lines the substrate pocket. ATP-binding residues include Lys334 and Asp414. Lys417 serves as a coordination point for substrate.

This sequence belongs to the inositol phosphokinase (IPK) family.

The protein localises to the cytoplasm. The protein resides in the cytoskeleton. The catalysed reaction is 1D-myo-inositol 1,4,5-trisphosphate + ATP = 1D-myo-inositol 1,3,4,5-tetrakisphosphate + ADP + H(+). Its activity is regulated as follows. Activated by calcium/calmodulin. In terms of biological role, catalyzes the phosphorylation of 1D-myo-inositol 1,4,5-trisphosphate (InsP3) into 1D-myo-inositol 1,3,4,5-tetrakisphosphate and participates to the regulation of calcium homeostasis. In Mus musculus (Mouse), this protein is Inositol-trisphosphate 3-kinase A.